Reading from the N-terminus, the 258-residue chain is DNA repair protein RecO (258 aa).

The protein belongs to the RecO family.

Its function is as follows. Involved in DNA repair and RecF pathway recombination. In Oceanobacillus iheyensis (strain DSM 14371 / CIP 107618 / JCM 11309 / KCTC 3954 / HTE831), this protein is DNA repair protein RecO.